Here is a 277-residue protein sequence, read N- to C-terminus: Putative phosphoenolpyruvate synthase regulatory protein (277 aa).

Residue 157-164 (GVSRCGKT) participates in ADP binding.

The protein belongs to the pyruvate, phosphate/water dikinase regulatory protein family. PSRP subfamily.

The enzyme catalyses [pyruvate, water dikinase] + ADP = [pyruvate, water dikinase]-phosphate + AMP + H(+). The catalysed reaction is [pyruvate, water dikinase]-phosphate + phosphate + H(+) = [pyruvate, water dikinase] + diphosphate. Bifunctional serine/threonine kinase and phosphorylase involved in the regulation of the phosphoenolpyruvate synthase (PEPS) by catalyzing its phosphorylation/dephosphorylation. This Enterobacter sp. (strain 638) protein is Putative phosphoenolpyruvate synthase regulatory protein.